The chain runs to 492 residues: Glutamyl-tRNA(Gln) amidotransferase subunit A (492 aa).

Active-site charge relay system residues include K78 and S158. S182 acts as the Acyl-ester intermediate in catalysis.

This sequence belongs to the amidase family. GatA subfamily. In terms of assembly, heterotrimer of A, B and C subunits.

It catalyses the reaction L-glutamyl-tRNA(Gln) + L-glutamine + ATP + H2O = L-glutaminyl-tRNA(Gln) + L-glutamate + ADP + phosphate + H(+). Functionally, allows the formation of correctly charged Gln-tRNA(Gln) through the transamidation of misacylated Glu-tRNA(Gln) in organisms which lack glutaminyl-tRNA synthetase. The reaction takes place in the presence of glutamine and ATP through an activated gamma-phospho-Glu-tRNA(Gln). In Parvibaculum lavamentivorans (strain DS-1 / DSM 13023 / NCIMB 13966), this protein is Glutamyl-tRNA(Gln) amidotransferase subunit A.